The primary structure comprises 278 residues: ATP synthase subunit a (278 aa).

6 helical membrane-spanning segments follow: residues 41–61 (FLNIDSLFFSFFLGIIFLLFF), 108–128 (LTIFVWLFLMNLMDLIPVDFV), 149–168 (INITLSMSLGVFLLILYFGI), 180–200 (FFFQPFNNYLLIPVNLVLELI), 222–242 (LIFILISGLLPWWLQWILSVP), and 244–264 (AIFHILIIILQAFIFMILTII).

Belongs to the ATPase A chain family. As to quaternary structure, F-type ATPases have 2 components, CF(1) - the catalytic core - and CF(0) - the membrane proton channel. CF(1) has five subunits: alpha(3), beta(3), gamma(1), delta(1), epsilon(1). CF(0) has three main subunits: a(1), b(2) and c(9-12). The alpha and beta chains form an alternating ring which encloses part of the gamma chain. CF(1) is attached to CF(0) by a central stalk formed by the gamma and epsilon chains, while a peripheral stalk is formed by the delta and b chains.

Its subcellular location is the cell membrane. Key component of the proton channel; it plays a direct role in the translocation of protons across the membrane. This Wigglesworthia glossinidia brevipalpis protein is ATP synthase subunit a.